A 430-amino-acid chain; its full sequence is Enolase (430 aa).

Gln165 contributes to the (2R)-2-phosphoglycerate binding site. Glu207 (proton donor) is an active-site residue. Mg(2+) contacts are provided by Asp244, Glu287, and Asp314. Lys339, Arg368, Ser369, and Lys390 together coordinate (2R)-2-phosphoglycerate. Lys339 acts as the Proton acceptor in catalysis.

Belongs to the enolase family. As to quaternary structure, component of the RNA degradosome, a multiprotein complex involved in RNA processing and mRNA degradation. Mg(2+) serves as cofactor.

The protein localises to the cytoplasm. The protein resides in the secreted. It is found in the cell surface. The catalysed reaction is (2R)-2-phosphoglycerate = phosphoenolpyruvate + H2O. It participates in carbohydrate degradation; glycolysis; pyruvate from D-glyceraldehyde 3-phosphate: step 4/5. In terms of biological role, catalyzes the reversible conversion of 2-phosphoglycerate (2-PG) into phosphoenolpyruvate (PEP). It is essential for the degradation of carbohydrates via glycolysis. The sequence is that of Enolase from Stenotrophomonas maltophilia (strain K279a).